We begin with the raw amino-acid sequence, 440 residues long: tRNA(Ile)-lysidine synthase (440 aa).

Residue 31 to 36 participates in ATP binding; that stretch reads SGGADS.

Belongs to the tRNA(Ile)-lysidine synthase family.

It localises to the cytoplasm. It carries out the reaction cytidine(34) in tRNA(Ile2) + L-lysine + ATP = lysidine(34) in tRNA(Ile2) + AMP + diphosphate + H(+). In terms of biological role, ligates lysine onto the cytidine present at position 34 of the AUA codon-specific tRNA(Ile) that contains the anticodon CAU, in an ATP-dependent manner. Cytidine is converted to lysidine, thus changing the amino acid specificity of the tRNA from methionine to isoleucine. The polypeptide is tRNA(Ile)-lysidine synthase (Borrelia garinii subsp. bavariensis (strain ATCC BAA-2496 / DSM 23469 / PBi) (Borreliella bavariensis)).